Reading from the N-terminus, the 319-residue chain is ATP-dependent 6-phosphofructokinase (319 aa).

Residue Gly11 participates in ATP binding. An ADP-binding site is contributed by 21–25 (RAVVR). ATP contacts are provided by residues 72–73 (RC) and 102–105 (GDGS). Mg(2+) is bound at residue Asp103. 125–127 (TID) contributes to the substrate binding site. The active-site Proton acceptor is Asp127. Arg154 serves as a coordination point for ADP. Substrate contacts are provided by residues Arg162 and 169-171 (MGR). Residues 185-187 (GAE), Arg211, and 213-215 (KKH) each bind ADP. Substrate contacts are provided by residues Glu222, Arg243, and 249–252 (HIQR).

The protein belongs to the phosphofructokinase type A (PFKA) family. ATP-dependent PFK group I subfamily. Prokaryotic clade 'B1' sub-subfamily. Homotetramer. Mg(2+) is required as a cofactor.

It localises to the cytoplasm. It carries out the reaction beta-D-fructose 6-phosphate + ATP = beta-D-fructose 1,6-bisphosphate + ADP + H(+). It participates in carbohydrate degradation; glycolysis; D-glyceraldehyde 3-phosphate and glycerone phosphate from D-glucose: step 3/4. Allosterically activated by ADP and other diphosphonucleosides, and allosterically inhibited by phosphoenolpyruvate. Catalyzes the phosphorylation of D-fructose 6-phosphate to fructose 1,6-bisphosphate by ATP, the first committing step of glycolysis. The polypeptide is ATP-dependent 6-phosphofructokinase (Shouchella clausii (strain KSM-K16) (Alkalihalobacillus clausii)).